Reading from the N-terminus, the 207-residue chain is Uridine kinase (207 aa).

Residue 13–20 (GASGSGKT) coordinates ATP.

This sequence belongs to the uridine kinase family.

It is found in the cytoplasm. It carries out the reaction uridine + ATP = UMP + ADP + H(+). The catalysed reaction is cytidine + ATP = CMP + ADP + H(+). The protein operates within pyrimidine metabolism; CTP biosynthesis via salvage pathway; CTP from cytidine: step 1/3. It functions in the pathway pyrimidine metabolism; UMP biosynthesis via salvage pathway; UMP from uridine: step 1/1. This Ureaplasma parvum serovar 3 (strain ATCC 27815 / 27 / NCTC 11736) protein is Uridine kinase.